A 398-amino-acid chain; its full sequence is Thyrotropin-releasing hormone receptor (398 aa).

Residues 1 to 28 (MENETGSELNQTQLQPRAVVALEYQVVT) lie on the Extracellular side of the membrane. Residues Asn-3 and Asn-10 are each glycosylated (N-linked (GlcNAc...) asparagine). The helical transmembrane segment at 29-51 (ILLVLIICGLGIVGNIMVVLVVM) threads the bilayer. At 52 to 61 (RTKHMRTPTN) the chain is on the cytoplasmic side. Residues 62-83 (CYLVSLAVADLMVLVAAGLPNI) traverse the membrane as a helical segment. Over 84–99 (TDSIYGSWVYGYVGCL) the chain is Extracellular. Cys-98 and Cys-179 are disulfide-bonded. The helical transmembrane segment at 100–121 (CITYLQYLGINASSCSITAFTI) threads the bilayer. Residues 122–144 (ERYIAICHPIKAQFLCTFSRAKK) are Cytoplasmic-facing. Residues 145–168 (IIIFVWAFTSIYCMLWFFLLDLNI) traverse the membrane as a helical segment. Topologically, residues 169–193 (STYKDAIVVSCGYKISRNYYSPIYL) are extracellular. Residues 194–215 (MDFGVFYVVPMILATVLYGFIA) traverse the membrane as a helical segment. Residues 216 to 266 (RILFLSPIPSDPKENSNTWKNDSTHQNKNLNSKTSNRYFNSTVSSRKQVTK) are Cytoplasmic-facing. The chain crosses the membrane as a helical span at residues 267 to 288 (MLAVVVILFALLWMPYRTLVVV). Residues 289-296 (NSFLSSPF) are Extracellular-facing. A helical transmembrane segment spans residues 297–319 (QENWFLLFCRICIYLNSAINPVI). At 320–398 (YNLMSQKFRA…LASEVTFSQS (79 aa)) the chain is on the cytoplasmic side.

The protein belongs to the G-protein coupled receptor 1 family.

It localises to the cell membrane. Functionally, receptor for thyrotropin-releasing hormone (TRH). Upon ligand binding, this G-protein-coupled receptor triggers activation of the phosphatidylinositol (IP3)-calcium-protein kinase C (PKC) pathway. In Ovis aries (Sheep), this protein is Thyrotropin-releasing hormone receptor (TRHR).